The sequence spans 490 residues: Proline--tRNA ligase (490 aa).

This sequence belongs to the class-II aminoacyl-tRNA synthetase family. ProS type 3 subfamily. In terms of assembly, homodimer.

The protein resides in the cytoplasm. The catalysed reaction is tRNA(Pro) + L-proline + ATP = L-prolyl-tRNA(Pro) + AMP + diphosphate. Its function is as follows. Catalyzes the attachment of proline to tRNA(Pro) in a two-step reaction: proline is first activated by ATP to form Pro-AMP and then transferred to the acceptor end of tRNA(Pro). The chain is Proline--tRNA ligase from Salinibacter ruber (strain DSM 13855 / M31).